Consider the following 167-residue polypeptide: RNA pyrophosphohydrolase (167 aa).

One can recognise a Nudix hydrolase domain in the interval 7 to 160 (PYRPCVGVMV…KRRAYEEVVA (154 aa)). Positions 48–69 (GGIDEGEDPLEAACRELYEETG) match the Nudix box motif.

It belongs to the Nudix hydrolase family. RppH subfamily. The cofactor is a divalent metal cation.

Functionally, accelerates the degradation of transcripts by removing pyrophosphate from the 5'-end of triphosphorylated RNA, leading to a more labile monophosphorylated state that can stimulate subsequent ribonuclease cleavage. The chain is RNA pyrophosphohydrolase from Rhizobium meliloti (strain 1021) (Ensifer meliloti).